Here is a 127-residue protein sequence, read N- to C-terminus: Large ribosomal subunit protein bL17 (127 aa).

The protein belongs to the bacterial ribosomal protein bL17 family. In terms of assembly, part of the 50S ribosomal subunit. Contacts protein L32.

The sequence is that of Large ribosomal subunit protein bL17 from Lacticaseibacillus casei (strain BL23) (Lactobacillus casei).